The following is a 134-amino-acid chain: Small ribosomal subunit protein uS8c (134 aa).

The protein belongs to the universal ribosomal protein uS8 family. As to quaternary structure, part of the 30S ribosomal subunit.

The protein resides in the plastid. Its subcellular location is the chloroplast. In terms of biological role, one of the primary rRNA binding proteins, it binds directly to 16S rRNA central domain where it helps coordinate assembly of the platform of the 30S subunit. This chain is Small ribosomal subunit protein uS8c (rps8), found in Lotus japonicus (Lotus corniculatus var. japonicus).